The chain runs to 906 residues: Protein translocase subunit SecA (906 aa).

ATP is bound by residues glutamine 87, 105–109 (GEGKT), and aspartate 512. The segment at 879 to 906 (REGEKIGRNDPCPCGSGQKYKQCHGKLS) is disordered. Cysteine 890, cysteine 892, cysteine 901, and histidine 902 together coordinate Zn(2+).

It belongs to the SecA family. In terms of assembly, monomer and homodimer. Part of the essential Sec protein translocation apparatus which comprises SecA, SecYEG and auxiliary proteins SecDF-YajC and YidC. Requires Zn(2+) as cofactor.

Its subcellular location is the cell inner membrane. It localises to the cytoplasm. It carries out the reaction ATP + H2O + cellular proteinSide 1 = ADP + phosphate + cellular proteinSide 2.. Part of the Sec protein translocase complex. Interacts with the SecYEG preprotein conducting channel. Has a central role in coupling the hydrolysis of ATP to the transfer of proteins into and across the cell membrane, serving both as a receptor for the preprotein-SecB complex and as an ATP-driven molecular motor driving the stepwise translocation of polypeptide chains across the membrane. The sequence is that of Protein translocase subunit SecA from Shewanella frigidimarina (strain NCIMB 400).